A 137-amino-acid chain; its full sequence is Large ribosomal subunit protein uL16 (137 aa).

This sequence belongs to the universal ribosomal protein uL16 family. In terms of assembly, part of the 50S ribosomal subunit.

In terms of biological role, binds 23S rRNA and is also seen to make contacts with the A and possibly P site tRNAs. This is Large ribosomal subunit protein uL16 from Xanthobacter autotrophicus (strain ATCC BAA-1158 / Py2).